The primary structure comprises 353 residues: Photosystem II D2 protein (353 aa).

T2 carries the post-translational modification N-acetylthreonine. Residue T2 is modified to Phosphothreonine. The chain crosses the membrane as a helical span at residues 41–61; it reads CAYFAIGGWFTGTTFVTSWYT. H118 provides a ligand contact to chlorophyll a. The helical transmembrane segment at 125 to 141 threads the bilayer; that stretch reads GFMLRQFELARSVQLRP. Residues Q130 and N143 each contribute to the pheophytin a site. Residues 153 to 166 traverse the membrane as a helical segment; sequence VFVSVFLIYPLGQS. H198 is a binding site for chlorophyll a. Residues 208-228 traverse the membrane as a helical segment; the sequence is AALLCAIHGATVENTLFEDGD. Residues H215 and F262 each coordinate a plastoquinone. Residue H215 coordinates Fe cation. H269 provides a ligand contact to Fe cation. A helical transmembrane segment spans residues 279 to 295; it reads GLWMSALGVVGLALNLR.

It belongs to the reaction center PufL/M/PsbA/D family. PSII is composed of 1 copy each of membrane proteins PsbA, PsbB, PsbC, PsbD, PsbE, PsbF, PsbH, PsbI, PsbJ, PsbK, PsbL, PsbM, PsbT, PsbX, PsbY, PsbZ, Psb30/Ycf12, at least 3 peripheral proteins of the oxygen-evolving complex and a large number of cofactors. It forms dimeric complexes. Requires The D1/D2 heterodimer binds P680, chlorophylls that are the primary electron donor of PSII, and subsequent electron acceptors. It shares a non-heme iron and each subunit binds pheophytin, quinone, additional chlorophylls, carotenoids and lipids. There is also a Cl(-1) ion associated with D1 and D2, which is required for oxygen evolution. The PSII complex binds additional chlorophylls, carotenoids and specific lipids. as cofactor.

Its subcellular location is the plastid. It localises to the chloroplast thylakoid membrane. It carries out the reaction 2 a plastoquinone + 4 hnu + 2 H2O = 2 a plastoquinol + O2. Functionally, photosystem II (PSII) is a light-driven water:plastoquinone oxidoreductase that uses light energy to abstract electrons from H(2)O, generating O(2) and a proton gradient subsequently used for ATP formation. It consists of a core antenna complex that captures photons, and an electron transfer chain that converts photonic excitation into a charge separation. The D1/D2 (PsbA/PsbD) reaction center heterodimer binds P680, the primary electron donor of PSII as well as several subsequent electron acceptors. D2 is needed for assembly of a stable PSII complex. The polypeptide is Photosystem II D2 protein (Carica papaya (Papaya)).